A 289-amino-acid chain; its full sequence is Homoserine kinase (289 aa).

79–89 provides a ligand contact to ATP; the sequence is PLARGLGSSSS.

Belongs to the GHMP kinase family. Homoserine kinase subfamily.

Its subcellular location is the cytoplasm. The catalysed reaction is L-homoserine + ATP = O-phospho-L-homoserine + ADP + H(+). The protein operates within amino-acid biosynthesis; L-threonine biosynthesis; L-threonine from L-aspartate: step 4/5. In terms of biological role, catalyzes the ATP-dependent phosphorylation of L-homoserine to L-homoserine phosphate. The polypeptide is Homoserine kinase (Streptococcus pneumoniae (strain Taiwan19F-14)).